The primary structure comprises 290 residues: 4-hydroxy-tetrahydrodipicolinate synthase (290 aa).

Position 44 (T44) interacts with pyruvate. Y131 (proton donor/acceptor) is an active-site residue. K159 (schiff-base intermediate with substrate) is an active-site residue. Residue I201 coordinates pyruvate.

It belongs to the DapA family. As to quaternary structure, homotetramer; dimer of dimers.

The protein resides in the cytoplasm. It carries out the reaction L-aspartate 4-semialdehyde + pyruvate = (2S,4S)-4-hydroxy-2,3,4,5-tetrahydrodipicolinate + H2O + H(+). It functions in the pathway amino-acid biosynthesis; L-lysine biosynthesis via DAP pathway; (S)-tetrahydrodipicolinate from L-aspartate: step 3/4. In terms of biological role, catalyzes the condensation of (S)-aspartate-beta-semialdehyde [(S)-ASA] and pyruvate to 4-hydroxy-tetrahydrodipicolinate (HTPA). This chain is 4-hydroxy-tetrahydrodipicolinate synthase, found in Jannaschia sp. (strain CCS1).